The chain runs to 200 residues: Lipopolysaccharide core heptose(II)-phosphate phosphatase (200 aa).

An N-terminal signal peptide occupies residues 1–25 (MLAFCRSSLKSKKYFIILLALAAIA).

This sequence belongs to the phosphoglycerate mutase family. Ais subfamily.

The protein resides in the periplasm. It participates in bacterial outer membrane biogenesis; lipopolysaccharide metabolism. Its function is as follows. Catalyzes the dephosphorylation of heptose(II) of the outer membrane lipopolysaccharide core. The polypeptide is Lipopolysaccharide core heptose(II)-phosphate phosphatase (Escherichia coli O17:K52:H18 (strain UMN026 / ExPEC)).